Reading from the N-terminus, the 496-residue chain is Nectin 1a (496 aa).

The first 20 residues, 1-20 (MMFINLLLRLMCVFLIGADG), serve as a signal peptide directing secretion. The Extracellular segment spans residues 21–349 (QMVQMESSKA…FQDQQQAGVV (329 aa)). The region spanning 34-138 (GSQVELPCQF…GNRENMVNLT (105 aa)) is the Ig-like V-type domain. A disulfide bridge links Cys41 with Cys121. Asn62 and Asn136 each carry an N-linked (GlcNAc...) asparagine glycan. Ig-like C2-type domains lie at 143–238 (PMIQ…VTLN) and 243–330 (PEVI…VIVT). 2 disulfide bridges follow: Cys168–Cys222 and Cys265–Cys312. An N-linked (GlcNAc...) asparagine glycan is attached at Asn282. A helical membrane pass occupies residues 350–370 (IGGAVVCGTVLLAAVTLLVVF). Over 371–496 (LYRRRCMFKG…SVISKEEWYV (126 aa)) the chain is Cytoplasmic.

This sequence belongs to the nectin family. Cis- and trans-homodimer. Can form trans-heterodimers. As to expression, expressed in the developing eye and nervous system.

The protein resides in the cell membrane. Its subcellular location is the cell junction. It localises to the adherens junction. In terms of biological role, cell adhesion molecule that promotes cell-cell contacts and plays important roles in the development of the nervous system. Acts by forming homophilic or heterophilic trans-dimers. This is Nectin 1a from Danio rerio (Zebrafish).